The sequence spans 599 residues: Omega-hydroxyceramide transacylase (599 aa).

The 170-residue stretch at 16-185 (ISFSGSGFLS…TSMQPCSFWT (170 aa)) folds into the PNPLA domain. The GXSXG motif lies at 51-55 (GTSAG). Serine 53 functions as the Nucleophile in the catalytic mechanism. Aspartate 172 serves as the catalytic Proton acceptor. The short motif at 172–174 (DGG) is the DGA/G element. The segment at 289–563 (PPPPSLQNLP…PASKLKSAPC (275 aa)) is disordered. Polar residues-rich tracts occupy residues 325–335 (SSAAPSVQTPE) and 350–362 (VSISKQPSVSPLS). A compositionally biased stretch (low complexity) spans 443–454 (SPESPRLLLRSS). The segment covering 468–478 (PLSPSTPPAGP) has biased composition (pro residues). Over residues 490-501 (ATGSPALSQLTG) the composition is skewed to polar residues. Residues 551-563 (SKKPASKLKSAPC) show a composition bias toward low complexity.

Specifically expressed in skin by keratinocytes, at the boundary area between the nucleated stratum granulosum and the denucleated stratum corneum in the epidermis (at protein level). Also expressed in stomach and other surface lining tissues like intestine and tongue. Also detected in testis as well as in other tissues but at very low level.

It localises to the cytoplasm. It catalyses the reaction an N-(omega-hydroxy-ultra-long chain fatty acyl)-sphingoid base + a (9Z,12Z)-octadecadienoyl-containing triacyl-sn-glycerol = an N-[omega-(9Z,12Z-octadecadienoyloxy)-O-ultra-long chain fatty acyl]-sphingoid base + a diacylglycerol. The enzyme catalyses an N-(omega-hydroxy-ultra-long chain fatty acyl)-sphing-4-enine + a (9Z,12Z)-octadecadienoyl-containing triacyl-sn-glycerol = an N-(omega-(9Z,12Z-octadecadienoyloxy)-ultra-long chain fatty acyl)-sphing-4-enine + a diacylglycerol. It carries out the reaction N-(28-hydroxyoctacosanoyl)-sphing-4-enine + a (9Z,12Z)-octadecadienoyl-containing triacyl-sn-glycerol = N-(28-(9Z,12Z-octadecadienoyloxy)-octacosanoyl)-sphing-4-enine + a diacylglycerol. The catalysed reaction is N-(30-hydroxytriacontanoyl)-sphing-4-enine + 1,2,3-tri-(9Z,12Z)-octadecadienoylglycerol = N-[30-(9Z,12Z-octadecadienoyloxy)-triacontanoyl]-sphing-4-enine + di-(9Z,12Z)-octadecadienoylglycerol. It catalyses the reaction N-(32-hydroxydotriacontanoyl)-sphing-4-enine + a (9Z,12Z)-octadecadienoyl-containing triacyl-sn-glycerol = N-(32-(9Z,12Z-octadecadienoyloxy)-dotricontanoyl)-sphing-4-enine + a diacylglycerol. The enzyme catalyses N-(32-hydroxydotriacontenoyl)-sphing-4-enine + a (9Z,12Z)-octadecadienoyl-containing triacyl-sn-glycerol = an N-(32-(9Z,12Z-octadecadienoyloxy)-dotriacontenoyl)-sphing-4-enine + a diacylglycerol. It carries out the reaction an N-(34-hydroxytetratriacontenoyl)-sphing-4-enine + a (9Z,12Z)-octadecadienoyl-containing triacyl-sn-glycerol = an N-(34-(9Z,12Z-octadecadienoyloxy)-tetratriacontenoyl)-sphing-4-enine + a diacylglycerol. The catalysed reaction is an N-(34-hydroxytetratriacontadienoyl)-sphing-4-enine + a (9Z,12Z)-octadecadienoyl-containing triacyl-sn-glycerol = an N-(34-(9Z,12Z-octadecadienoyloxy)-tetratriacontadienoyl)-sphing-4-enine + a diacylglycerol. It catalyses the reaction an N-(36-hydroxyhexatriacontenoyl)-sphing-4-enine + a (9Z,12Z)-octadecadienoyl-containing triacyl-sn-glycerol = an N-(36-(9Z,12Z-octadecadienoyloxy)-hexatriacontenoyl)-sphing-4-enine + a diacylglycerol. The enzyme catalyses an N-(36-hydroxyhexatriacontadienoyl)-sphing-4-enine + a (9Z,12Z)-octadecadienoyl-containing triacyl-sn-glycerol = an N-(36-(9Z,12Z-octadecadienoyloxy)-hexatriacontadienoyl)-sphing-4-enine + a diacylglycerol. It carries out the reaction an N-(38-hydroxyoctatriacontenoyl)-sphing-4-enine + a (9Z,12Z)-octadecadienoyl-containing triacyl-sn-glycerol = an N-(38-(9Z,12Z-octadecadienoyloxy)-octatriacontenoyl)-sphing-4-enine + a diacylglycerol. Omega-hydroxyceramide transacylase involved in the synthesis of omega-O-acylceramides (esterified omega-hydroxyacyl-sphingosine; EOS), which are extremely hydrophobic lipids involved in skin barrier formation. Catalyzes the last step of the synthesis of omega-O-acylceramides by transferring linoleic acid from triglycerides to an omega-hydroxyceramide. Omega-O-acylceramides, are required for the biogenesis of lipid lamellae in the stratum corneum and the formation of the cornified lipid envelope which are essential for the epidermis barrier function. These lipids also play a role in keratinocyte differentiation. May also act on omega-hydroxylated ultra-long chain fatty acids (omega-OH ULCFA) and acylglucosylceramides (GlcEOS). In Mus musculus (Mouse), this protein is Omega-hydroxyceramide transacylase.